We begin with the raw amino-acid sequence, 638 residues long: Poly(A)-specific ribonuclease PARN (638 aa).

Residues Asp-28 and Glu-30 each coordinate a divalent metal cation. Positions 143 to 165 (REQYDEKRSQSNGAGALSYTSPN) are disordered. A compositionally biased stretch (polar residues) spans 152–165 (QSNGAGALSYTSPN). Phosphoserine occurs at positions 163 and 167. Residues 178 to 245 (KKFIDQVVEK…ERYIVISKVD (68 aa)) form the R3H domain. Lys-220 carries the post-translational modification N6-acetyllysine. Residues Asp-292 and Asp-382 each coordinate a divalent metal cation. Position 499 is an N6-acetyllysine (Lys-499). At Ser-530 the chain carries Phosphoserine. The residue at position 557 (Ser-557) is a Phosphoserine; by MAPKAPK2. Residues 573 to 638 (RAEAGLEARA…AKLFEVPDTW (66 aa)) are disordered. Residues Ser-583 and Ser-587 each carry the phosphoserine modification. A compositionally biased stretch (basic residues) spans 606-615 (KKAKKLKRMK). Ser-619, Ser-623, and Ser-627 each carry phosphoserine.

This sequence belongs to the CAF1 family. In terms of assembly, homodimer. Found in a mRNA decay complex with RENT1, RENT2 and RENT3B. Interacts with KHSRP. Interacts with CELF1/CUGBP1. Interacts with ZC3HAV1 in an RNA-independent manner. Interacts with DHX36. The cofactor is Mg(2+). Phosphorylation by MAPKAPK2, preventing GADD45A mRNA degradation after genotoxic stress.

It is found in the nucleus. The protein localises to the cytoplasm. It localises to the nucleolus. The enzyme catalyses Exonucleolytic cleavage of poly(A) to 5'-AMP.. In terms of biological role, 3'-exoribonuclease that has a preference for poly(A) tails of mRNAs, thereby efficiently degrading poly(A) tails. Exonucleolytic degradation of the poly(A) tail is often the first step in the decay of eukaryotic mRNAs and is also used to silence certain maternal mRNAs translationally during oocyte maturation and early embryonic development. Involved in nonsense-mediated mRNA decay, a critical process of selective degradation of mRNAs that contain premature stop codons. Also involved in degradation of inherently unstable mRNAs that contain AU-rich elements (AREs) in their 3'-UTR, possibly via its interaction with KHSRP. Probably mediates the removal of poly(A) tails of AREs mRNAs, which constitutes the first step of destabilization. Interacts with both the 3'-end poly(A) tail and the 5'-end cap structure during degradation, the interaction with the cap structure being required for an efficient degradation of poly(A) tails. Also able to recognize poly(A) tails of microRNAs such as MIR21 and H/ACA box snoRNAs (small nucleolar RNAs) leading to microRNAs degradation or snoRNA increased stability. This chain is Poly(A)-specific ribonuclease PARN (PARN), found in Bos taurus (Bovine).